A 125-amino-acid polypeptide reads, in one-letter code: Small ribosomal subunit protein eS8 (125 aa).

The protein belongs to the eukaryotic ribosomal protein eS8 family. In terms of assembly, part of the 30S ribosomal subunit.

The protein is Small ribosomal subunit protein eS8 of Methanocorpusculum labreanum (strain ATCC 43576 / DSM 4855 / Z).